The following is a 449-amino-acid chain: Tubulin alpha-2 chain (449 aa).

Gln11 serves as a coordination point for GTP. The residue at position 40 (Lys40) is an N6-acetyllysine. Glu71, Ser140, Gly144, Thr145, Thr179, Asn206, and Asn228 together coordinate GTP. Residue Glu71 participates in Mg(2+) binding. Glu254 is an active-site residue.

The protein belongs to the tubulin family. In terms of assembly, dimer of alpha and beta chains. A typical microtubule is a hollow water-filled tube with an outer diameter of 25 nm and an inner diameter of 15 nM. Alpha-beta heterodimers associate head-to-tail to form protofilaments running lengthwise along the microtubule wall with the beta-tubulin subunit facing the microtubule plus end conferring a structural polarity. Microtubules usually have 13 protofilaments but different protofilament numbers can be found in some organisms and specialized cells. Requires Mg(2+) as cofactor. In terms of processing, undergoes a tyrosination/detyrosination cycle, the cyclic removal and re-addition of a C-terminal tyrosine residue by the enzymes tubulin tyrosine carboxypeptidase (TTCP) and tubulin tyrosine ligase (TTL), respectively. Acetylation of alpha chains at Lys-40 stabilizes microtubules and affects affinity and processivity of microtubule motors. This modification has a role in multiple cellular functions, ranging from cell motility, cell cycle progression or cell differentiation to intracellular trafficking and signaling. During the early stages of oogenesis lky/Alpha-tubulin N-acetyltransferase 2 is the main acetyltransferase responsible for Lys-40 acetylation in germline cells while Atat/alpha-tubulin N-acetyltransferase 1 is the main acetyltransferase responsible for Lys-40 acetylation in somatic cells.

The protein localises to the cytoplasm. It is found in the cytoskeleton. The catalysed reaction is GTP + H2O = GDP + phosphate + H(+). Tubulin is the major constituent of microtubules, a cylinder consisting of laterally associated linear protofilaments composed of alpha- and beta-tubulin heterodimers. Microtubules grow by the addition of GTP-tubulin dimers to the microtubule end, where a stabilizing cap forms. Below the cap, tubulin dimers are in GDP-bound state, owing to GTPase activity of alpha-tubulin. This Drosophila melanogaster (Fruit fly) protein is Tubulin alpha-2 chain (alphaTub85E).